Here is a 396-residue protein sequence, read N- to C-terminus: Corticosteroid-binding globulin (396 aa).

The N-terminal stretch at 1 to 22 (MSLALYTCLLWLCTSGLWTAQA) is a signal peptide. N-linked (GlcNAc...) asparagine glycans are attached at residues asparagine 88 and asparagine 216. Residue glutamine 246 coordinates cortisol. Asparagine 252 is a glycosylation site (N-linked (GlcNAc...) asparagine). Aspartate 278 contacts cortisol. 2 N-linked (GlcNAc...) asparagine glycosylation sites follow: asparagine 319 and asparagine 352. Tryptophan 384 is a cortisol binding site.

Belongs to the serpin family. Expressed by the liver; secreted in plasma.

It is found in the secreted. In terms of biological role, major transport protein for glucocorticoids and progestins in the blood of almost all vertebrate species. The protein is Corticosteroid-binding globulin (Serpina6) of Rattus norvegicus (Rat).